An 88-amino-acid polypeptide reads, in one-letter code: UPF0297 protein YrzL (88 aa).

It belongs to the UPF0297 family.

In Bacillus subtilis (strain 168), this protein is UPF0297 protein YrzL (yrzL).